The primary structure comprises 275 residues: Small ribosomal subunit protein uS3 (275 aa).

The 69-residue stretch at 38-106 (IRRLLSSGLE…QVQLNILEVK (69 aa)) folds into the KH type-2 domain. A disordered region spans residues 217-275 (AVPAGADRPRRERPAGSRPRRSGASGTTATGTEAGRAVGSEEPAAAESATTPEAQSTES). A compositionally biased stretch (low complexity) spans 238–275 (SGASGTTATGTEAGRAVGSEEPAAAESATTPEAQSTES).

The protein belongs to the universal ribosomal protein uS3 family. As to quaternary structure, part of the 30S ribosomal subunit. Forms a tight complex with proteins S10 and S14.

Its function is as follows. Binds the lower part of the 30S subunit head. Binds mRNA in the 70S ribosome, positioning it for translation. This is Small ribosomal subunit protein uS3 from Mycobacterium marinum (strain ATCC BAA-535 / M).